The primary structure comprises 292 residues: MSERLSGHTLLVSLLATPIRHSLSPKMHNEAYAKLGLDYAYLAFEVGTEQLADAVQGIRALGIRGSNVSMPNKEAILPLLDDLSPAAELVGAVNTVVNKDGKGHLVGHITDGIGALRALADEGVSVKNKIITLAGVGGAGKAIAVQLAFDGAKEIRLFNRQATRLSSVQKLVTKLNQLTRTKVTLQDLEDQTAFKEAIRESHLFIDATSVGMKPLENLSLITDPELIRPDLVVFDIVYSPAETKLLAFARQHGAQKVINGLGMVLYQGAEAFKLITGQDMPVDAIKPLLGDE.

Shikimate is bound by residues Ser-22–Ser-24 and Ser-69. Catalysis depends on Lys-73, which acts as the Proton acceptor. 2 residues coordinate shikimate: Asn-94 and Asp-111. NADP(+) contacts are provided by residues Gly-135–Ala-139 and Ile-236. Tyr-238 serves as a coordination point for shikimate. Gly-260 serves as a coordination point for NADP(+).

The protein belongs to the shikimate dehydrogenase family. As to quaternary structure, homodimer.

It carries out the reaction shikimate + NADP(+) = 3-dehydroshikimate + NADPH + H(+). Its pathway is metabolic intermediate biosynthesis; chorismate biosynthesis; chorismate from D-erythrose 4-phosphate and phosphoenolpyruvate: step 4/7. In terms of biological role, involved in the biosynthesis of the chorismate, which leads to the biosynthesis of aromatic amino acids. Catalyzes the reversible NADPH linked reduction of 3-dehydroshikimate (DHSA) to yield shikimate (SA). This is Shikimate dehydrogenase (NADP(+)) from Streptococcus pyogenes serotype M28 (strain MGAS6180).